Here is a 271-residue protein sequence, read N- to C-terminus: S-adenosylmethionine decarboxylase proenzyme (271 aa).

The active-site Schiff-base intermediate with substrate; via pyruvic acid is the Ser-121. Pyruvic acid (Ser); by autocatalysis is present on Ser-121. Residue His-126 is the Proton acceptor; for processing activity of the active site. Catalysis depends on Cys-149, which acts as the Proton donor; for catalytic activity.

The protein belongs to the prokaryotic AdoMetDC family. Type 2 subfamily. Heterooctamer of four alpha and four beta chains arranged as a tetramer of alpha/beta heterodimers. The cofactor is pyruvate. In terms of processing, is synthesized initially as an inactive proenzyme. Formation of the active enzyme involves a self-maturation process in which the active site pyruvoyl group is generated from an internal serine residue via an autocatalytic post-translational modification. Two non-identical subunits are generated from the proenzyme in this reaction, and the pyruvate is formed at the N-terminus of the alpha chain, which is derived from the carboxyl end of the proenzyme. The post-translation cleavage follows an unusual pathway, termed non-hydrolytic serinolysis, in which the side chain hydroxyl group of the serine supplies its oxygen atom to form the C-terminus of the beta chain, while the remainder of the serine residue undergoes an oxidative deamination to produce ammonia and the pyruvoyl group blocking the N-terminus of the alpha chain.

The enzyme catalyses S-adenosyl-L-methionine + H(+) = S-adenosyl 3-(methylsulfanyl)propylamine + CO2. It participates in amine and polyamine biosynthesis; S-adenosylmethioninamine biosynthesis; S-adenosylmethioninamine from S-adenosyl-L-methionine: step 1/1. Its function is as follows. Catalyzes the decarboxylation of S-adenosylmethionine to S-adenosylmethioninamine (dcAdoMet), the propylamine donor required for the synthesis of the polyamines spermine and spermidine from the diamine putrescine. This is S-adenosylmethionine decarboxylase proenzyme from Clostridium perfringens (strain ATCC 13124 / DSM 756 / JCM 1290 / NCIMB 6125 / NCTC 8237 / Type A).